A 251-amino-acid chain; its full sequence is NLP effector protein Pc129485 (251 aa).

The N-terminal stretch at 1–19 (MNFRIVLLVLVASLAGAQA) is a signal peptide. Residues 127-133 (GHRHNWE) carry the Hepta-peptide GHRHDWE motif motif. N-linked (GlcNAc...) asparagine glycosylation is found at N146 and N218.

It belongs to the Necrosis inducing protein (NPP1) family.

The protein resides in the secreted. Secreted effector that contributes strongly to virulence during infection by P.capsici. In Phytophthora capsici, this protein is NLP effector protein Pc129485.